The primary structure comprises 237 residues: Demethylmenaquinone methyltransferase (237 aa).

Residues Thr58, Asp79, and Asn107–Ala108 contribute to the S-adenosyl-L-methionine site.

The protein belongs to the class I-like SAM-binding methyltransferase superfamily. MenG/UbiE family.

It carries out the reaction a 2-demethylmenaquinol + S-adenosyl-L-methionine = a menaquinol + S-adenosyl-L-homocysteine + H(+). It participates in quinol/quinone metabolism; menaquinone biosynthesis; menaquinol from 1,4-dihydroxy-2-naphthoate: step 2/2. Its function is as follows. Methyltransferase required for the conversion of demethylmenaquinol (DMKH2) to menaquinol (MKH2). This chain is Demethylmenaquinone methyltransferase, found in Lactiplantibacillus plantarum (strain ATCC BAA-793 / NCIMB 8826 / WCFS1) (Lactobacillus plantarum).